A 292-amino-acid chain; its full sequence is Bifunctional protein FolD (292 aa).

NADP(+) is bound by residues 171-173 (GAS), Ile-196, and Ile-237.

It belongs to the tetrahydrofolate dehydrogenase/cyclohydrolase family. Homodimer.

The enzyme catalyses (6R)-5,10-methylene-5,6,7,8-tetrahydrofolate + NADP(+) = (6R)-5,10-methenyltetrahydrofolate + NADPH. The catalysed reaction is (6R)-5,10-methenyltetrahydrofolate + H2O = (6R)-10-formyltetrahydrofolate + H(+). Its pathway is one-carbon metabolism; tetrahydrofolate interconversion. In terms of biological role, catalyzes the oxidation of 5,10-methylenetetrahydrofolate to 5,10-methenyltetrahydrofolate and then the hydrolysis of 5,10-methenyltetrahydrofolate to 10-formyltetrahydrofolate. The chain is Bifunctional protein FolD from Helicobacter acinonychis (strain Sheeba).